Here is a 261-residue protein sequence, read N- to C-terminus: Ribosomal RNA small subunit methyltransferase J (261 aa).

S-adenosyl-L-methionine is bound by residues 109–110 (RD), 125–126 (ER), and Asp179.

The protein belongs to the methyltransferase superfamily. RsmJ family.

The protein resides in the cytoplasm. It catalyses the reaction guanosine(1516) in 16S rRNA + S-adenosyl-L-methionine = N(2)-methylguanosine(1516) in 16S rRNA + S-adenosyl-L-homocysteine + H(+). Functionally, specifically methylates the guanosine in position 1516 of 16S rRNA. The sequence is that of Ribosomal RNA small subunit methyltransferase J from Pseudomonas aeruginosa (strain ATCC 15692 / DSM 22644 / CIP 104116 / JCM 14847 / LMG 12228 / 1C / PRS 101 / PAO1).